A 221-amino-acid chain; its full sequence is ATP phosphoribosyltransferase (221 aa).

Belongs to the ATP phosphoribosyltransferase family. Short subfamily. Heteromultimer composed of HisG and HisZ subunits.

Its subcellular location is the cytoplasm. It catalyses the reaction 1-(5-phospho-beta-D-ribosyl)-ATP + diphosphate = 5-phospho-alpha-D-ribose 1-diphosphate + ATP. It functions in the pathway amino-acid biosynthesis; L-histidine biosynthesis; L-histidine from 5-phospho-alpha-D-ribose 1-diphosphate: step 1/9. Its function is as follows. Catalyzes the condensation of ATP and 5-phosphoribose 1-diphosphate to form N'-(5'-phosphoribosyl)-ATP (PR-ATP). Has a crucial role in the pathway because the rate of histidine biosynthesis seems to be controlled primarily by regulation of HisG enzymatic activity. The polypeptide is ATP phosphoribosyltransferase (Anaeromyxobacter sp. (strain K)).